The primary structure comprises 214 residues: Germin-like protein 9-3 (214 aa).

An N-terminal signal peptide occupies residues 1–23 (MASSILLLVVLAVVSAPVALVMA). N-linked (GlcNAc...) asparagine glycosylation is found at Asn42, Asn60, and Asn69. Residues 59 to 202 (MNMSMPMPNA…SFKTDVPTIQ (144 aa)) enclose the Cupin type-1 domain. The Mn(2+) site is built by His104, His106, Glu111, and His150.

The protein belongs to the germin family. In terms of assembly, oligomer (believed to be a pentamer but probably hexamer).

It localises to the secreted. The protein resides in the extracellular space. It is found in the apoplast. Its function is as follows. May play a role in plant defense. Probably has no oxalate oxidase activity even if the active site is conserved. In Oryza sativa subsp. japonica (Rice), this protein is Germin-like protein 9-3.